A 335-amino-acid polypeptide reads, in one-letter code: Glyceraldehyde-3-phosphate dehydrogenase, cytosolic (335 aa).

NAD(+) is bound by residues 13 to 14 (RI), D35, and R80. D-glyceraldehyde 3-phosphate is bound by residues 151–153 (SCT), T182, 211–212 (TG), and R234. C152 functions as the Nucleophile in the catalytic mechanism. N316 contributes to the NAD(+) binding site.

It belongs to the glyceraldehyde-3-phosphate dehydrogenase family. Homotetramer.

The protein resides in the cytoplasm. It carries out the reaction D-glyceraldehyde 3-phosphate + phosphate + NAD(+) = (2R)-3-phospho-glyceroyl phosphate + NADH + H(+). It participates in carbohydrate degradation; glycolysis; pyruvate from D-glyceraldehyde 3-phosphate: step 1/5. This chain is Glyceraldehyde-3-phosphate dehydrogenase, cytosolic (GAPC), found in Gracilaria gracilis (Red alga).